A 131-amino-acid chain; its full sequence is Peptide methionine sulfoxide reductase MsrB (131 aa).

Residues 9 to 131 (DEDWKKELTP…NSASLKFQKE (123 aa)) enclose the MsrB domain. Residues cysteine 48, cysteine 51, cysteine 97, and cysteine 100 each coordinate Zn(2+). Catalysis depends on cysteine 120, which acts as the Nucleophile.

This sequence belongs to the MsrB Met sulfoxide reductase family. Requires Zn(2+) as cofactor.

The catalysed reaction is L-methionyl-[protein] + [thioredoxin]-disulfide + H2O = L-methionyl-(R)-S-oxide-[protein] + [thioredoxin]-dithiol. The chain is Peptide methionine sulfoxide reductase MsrB from Leptospira interrogans serogroup Icterohaemorrhagiae serovar Lai (strain 56601).